The sequence spans 205 residues: Peptidyl-tRNA hydrolase (205 aa).

Tyrosine 18 contacts tRNA. Catalysis depends on histidine 23, which acts as the Proton acceptor. Positions 69, 71, and 117 each coordinate tRNA.

It belongs to the PTH family. Monomer.

The protein localises to the cytoplasm. It catalyses the reaction an N-acyl-L-alpha-aminoacyl-tRNA + H2O = an N-acyl-L-amino acid + a tRNA + H(+). Hydrolyzes ribosome-free peptidyl-tRNAs (with 1 or more amino acids incorporated), which drop off the ribosome during protein synthesis, or as a result of ribosome stalling. Its function is as follows. Catalyzes the release of premature peptidyl moieties from peptidyl-tRNA molecules trapped in stalled 50S ribosomal subunits, and thus maintains levels of free tRNAs and 50S ribosomes. The sequence is that of Peptidyl-tRNA hydrolase from Thermosynechococcus vestitus (strain NIES-2133 / IAM M-273 / BP-1).